The following is a 180-amino-acid chain: NADH-quinone oxidoreductase subunit I (180 aa).

2 consecutive 4Fe-4S ferredoxin-type domains span residues 48 to 80 (IVLTRDPDGQERCVACNLCAVACPVGCISLQKA) and 90 to 119 (EFFRINFSRCIFCGLCEEACPTTAIQLTPD). Residues cysteine 60, cysteine 63, cysteine 66, cysteine 70, cysteine 99, cysteine 102, cysteine 105, and cysteine 109 each coordinate [4Fe-4S] cluster.

Belongs to the complex I 23 kDa subunit family. NDH-1 is composed of 13 different subunits. Subunits NuoA, H, J, K, L, M, N constitute the membrane sector of the complex. [4Fe-4S] cluster serves as cofactor.

It is found in the cell inner membrane. The catalysed reaction is a quinone + NADH + 5 H(+)(in) = a quinol + NAD(+) + 4 H(+)(out). NDH-1 shuttles electrons from NADH, via FMN and iron-sulfur (Fe-S) centers, to quinones in the respiratory chain. The immediate electron acceptor for the enzyme in this species is believed to be ubiquinone. Couples the redox reaction to proton translocation (for every two electrons transferred, four hydrogen ions are translocated across the cytoplasmic membrane), and thus conserves the redox energy in a proton gradient. The polypeptide is NADH-quinone oxidoreductase subunit I (Erwinia tasmaniensis (strain DSM 17950 / CFBP 7177 / CIP 109463 / NCPPB 4357 / Et1/99)).